Consider the following 3054-residue polypeptide: Genome polyprotein (3054 aa).

A Peptidase S30 domain is found at 163–304 (FLPATSLSNV…FAVCHSMTHY (142 aa)). Residues His-214, Asp-223, and Ser-256 each act as for P1 proteinase activity in the active site. Residues 358-361 (KITC) carry the Involved in interaction with stylet and aphid transmission motif. Positions 615–617 (PTK) match the Involved in virions binding and aphid transmission motif. Positions 641–763 (MYIANEGYCY…ESEMKTYNVG (123 aa)) constitute a Peptidase C6 domain. Residues Cys-649 and His-722 each act as for helper component proteinase activity in the active site. The region spanning 1234 to 1386 (EISHSPARDF…TQFPVKLKIE (153 aa)) is the Helicase ATP-binding domain. 1247 to 1254 (GAVGSGKS) is an ATP binding site. The short motif at 1336 to 1339 (DECH) is the DECH box element. The 164-residue stretch at 1401–1564 (GANADVISCG…NLPVTTQSVS (164 aa)) folds into the Helicase C-terminal domain. The short motif at 1889–1896 (NKGKRKGT) is the Nuclear localization signal element. Tyr-1911 bears the O-(5'-phospho-RNA)-tyrosine mark. The 218-residue stretch at 2038–2255 (GESLFKGPRD…VLWGGHKVFM (218 aa)) folds into the Peptidase C4 domain. Active-site for nuclear inclusion protein A activity residues include His-2083, Asp-2118, and Cys-2188. A RdRp catalytic domain is found at 2521–2641 (WVYCDADGSQ…AIHPDKAERL (121 aa)). The tract at residues 2798 to 2827 (GADAGKKKDQKDDKVAEQASKDRDVNAGTS) is disordered. Residues 2801–2822 (AGKKKDQKDDKVAEQASKDRDV) show a composition bias toward basic and acidic residues. Residue Thr-3038 is modified to Phosphothreonine.

Belongs to the potyviridae genome polyprotein family. Interacts with host eIF4E protein (via cap-binding region); this interaction mediates the translation of the VPg-viral RNA conjugates. Part of a complex that comprises VPg, RNA, host EIF4E and EIF4G; this interaction mediates the translation of the VPg-viral RNA conjugates. Interaction is possible in susceptible hosts but impaired in resistant plants: the VPg of strain HAT interacts with tomato eIF4E1 and eIF4E2 as well as with Capsicum annuum eIF4E1 susceptible alleles pvr2(+), pvr2(3) and pvr2(9) but not with the resistant allele pvr2(2), the VPg of strain CAA10 interacts with C.annuum eIF4E1 susceptible alleles pvr2(+), pvr2(2), pvr2(3) and pvr2(9), the VPg of strain NW interacts at least with C.annuum eIF4E1. As to quaternary structure, homodimer; disulfide-linked. VPg is uridylylated by the polymerase and is covalently attached to the 5'-end of the genomic RNA. This uridylylated form acts as a nucleotide-peptide primer for the polymerase. In terms of processing, potyviral RNA is expressed as two polyproteins which undergo post-translational proteolytic processing. Genome polyprotein is processed by NIa-pro, P1 and HC-pro proteinases resulting in the production of at least ten individual proteins. P3N-PIPO polyprotein is cleaved by P1 and HC-pro proteinases resulting in the production of three individual proteins. The P1 proteinase and the HC-pro cleave only their respective C-termini autocatalytically. 6K1 is essential for proper proteolytic separation of P3 from CI.

Its subcellular location is the host cytoplasmic vesicle. The protein localises to the host nucleus. It localises to the virion. It carries out the reaction RNA(n) + a ribonucleoside 5'-triphosphate = RNA(n+1) + diphosphate. It catalyses the reaction Hydrolyzes glutaminyl bonds, and activity is further restricted by preferences for the amino acids in P6 - P1' that vary with the species of potyvirus, e.g. Glu-Xaa-Xaa-Tyr-Xaa-Gln-|-(Ser or Gly) for the enzyme from tobacco etch virus. The natural substrate is the viral polyprotein, but other proteins and oligopeptides containing the appropriate consensus sequence are also cleaved.. The enzyme catalyses Hydrolyzes a Gly-|-Gly bond at its own C-terminus, commonly in the sequence -Tyr-Xaa-Val-Gly-|-Gly, in the processing of the potyviral polyprotein.. Functionally, required for aphid transmission and also has proteolytic activity. Only cleaves a Gly-Gly dipeptide at its own C-terminus. Interacts with virions and aphid stylets. Acts as a suppressor of RNA-mediated gene silencing, also known as post-transcriptional gene silencing (PTGS), a mechanism of plant viral defense that limits the accumulation of viral RNAs. May have RNA-binding activity. In terms of biological role, has helicase activity. It may be involved in replication. Its function is as follows. Indispensable for virus replication. Reduces the abundance of host transcripts related to jasmonic acid biosynthesis therefore altering the host defenses. In order to increase its own stability, decreases host protein degradation pathways. Indispensable for virus replication. Functionally, mediates the cap-independent, EIF4E-dependent translation of viral genomic RNAs. Binds to the cap-binding site of host EIF4E and thus interferes with the host EIF4E-dependent mRNA export and translation. VPg-RNA directly binds EIF4E and is a template for transcription. Also forms trimeric complexes with EIF4E-EIF4G, which are templates for translation. In terms of biological role, has RNA-binding and proteolytic activities. Its function is as follows. An RNA-dependent RNA polymerase that plays an essential role in the virus replication. Involved in aphid transmission, cell-to-cell and systemis movement, encapsidation of the viral RNA and in the regulation of viral RNA amplification. The sequence is that of Genome polyprotein from Capsicum annuum (Capsicum pepper).